The chain runs to 683 residues: MLFIFNFLFSPLPTPALICLLTFGTAIFLWLINRPQPVLPLIDLDNQSVGIEGGARRGAFQKNNDLILYYFSDAKTLYENFQRGLAVSDNGPCLGYRKPNQPYKWISYKQVSDRAEYLGSCLLHKGYKSSQDQFVGIFAQNRPEWVISELACYTYSMVAVPLYDTLGTEAIIFVINRADIPVVICDTPQKATMLVENVEKGLTPGLKTIILMDPFDDDLMKRGEKCGVEMLSLHDAENIGKENFKKPVPPKPEDLSVICFTSGTTGDPKGAMLTHENVVSNMAAFLKFLEPIFQPTSDDVTISYLPLAHMFERLVQGILFSCGGKIGFFQGDIRLLPDDMKALKPTVFPTVPRLLNRVYDKVQNEAKTPLKKFLLNLAIISKFNEVKNGIIRRDSLWDKLVFSKIQGSLGGKVRLMITGAAPISTPVLTFFRAAMGCWVFEAYGQTECTGGCSITSPGDWTAGHVGTPVACNFVKLEDVADMNYFSVNNEGEICIKGNNVFKGYLKDPEKTQEVLDKDGWLHTGDIGRWLPNGTLKIVDRKKNIFKLAQGEYIAPEKIENVYSRSRPVLQVFVHGESLRSFLIGVVVPDPDSLPSFAAKIGVKGSFEELCKNQCVKEAILEDLQKIGKEGGLKSFEQVKSIFVHPEPFTIENGLLTPTLKAKRVELAKFFQTQIKSLYESIEE.

A helical; Signal-anchor for type III membrane protein membrane pass occupies residues 12–32; sequence LPTPALICLLTFGTAIFLWLI. The Cytoplasmic portion of the chain corresponds to 33 to 683; it reads NRPQPVLPLI…IKSLYESIEE (651 aa). Lys361 is subject to N6-acetyllysine.

The protein belongs to the ATP-dependent AMP-binding enzyme family.

The protein localises to the mitochondrion. The protein resides in the endoplasmic reticulum. It is found in the mitochondrion outer membrane. It localises to the endoplasmic reticulum membrane. Its subcellular location is the cell membrane. The enzyme catalyses a long-chain fatty acid + ATP + CoA = a long-chain fatty acyl-CoA + AMP + diphosphate. The catalysed reaction is (5Z,8Z,11Z,14Z)-eicosatetraenoate + ATP + CoA = (5Z,8Z,11Z,14Z)-eicosatetraenoyl-CoA + AMP + diphosphate. It carries out the reaction hexadecanoate + ATP + CoA = hexadecanoyl-CoA + AMP + diphosphate. It catalyses the reaction (E)-hexadec-2-enoate + ATP + CoA = (2E)-hexadecenoyl-CoA + AMP + diphosphate. The enzyme catalyses 15-hydroxy-(5Z,8Z,11Z,13E)-eicosatetraenoate + ATP + CoA = 15-hydroxy-(5Z,8Z,11Z,13E)-eicosatetraenoyl-CoA + AMP + diphosphate. The catalysed reaction is 12-hydroxy-(5Z,8Z,10E,14Z)-eicosatetraenoate + ATP + CoA = 12-hydroxy-(5Z,8Z,10E,14Z)-eicosatetraenoyl-CoA + AMP + diphosphate. It carries out the reaction 5-hydroxy-(6E,8Z,11Z,14Z)-eicosatetraenoate + ATP + CoA = 5-hydroxy-(6E,8Z,11Z,14Z)-eicosatetraenoyl-CoA + AMP + diphosphate. It catalyses the reaction 14,15-epoxy-(5Z,8Z,11Z)-eicosatrienoate + ATP + CoA = 14,15-epoxy-(5Z,8Z,11Z)-eicosatrienoyl-CoA + AMP + diphosphate. The enzyme catalyses 11,12-epoxy-(5Z,8Z,14Z)-eicosatrienoate + ATP + CoA = 11,12-epoxy-(5Z,8Z,14Z)-eicosatrienoyl-CoA + AMP + diphosphate. The catalysed reaction is (9Z)-octadecenoate + ATP + CoA = (9Z)-octadecenoyl-CoA + AMP + diphosphate. Functionally, catalyzes the conversion of long-chain fatty acids to their active form acyl-CoAs for both synthesis of cellular lipids, and degradation via beta-oxidation. ACSL5 may activate fatty acids from exogenous sources for the synthesis of triacylglycerol destined for intracellular storage. It was suggested that it may also stimulate fatty acid oxidation. At the villus tip of the crypt-villus axis of the small intestine may sensitize epithelial cells to apoptosis specifically triggered by the death ligand TRAIL. May have a role in the survival of glioma cells. Utilizes a wide range of saturated fatty acids with a preference for C16-C18 unsaturated fatty acids. The chain is Long-chain-fatty-acid--CoA ligase 5 from Mus musculus (Mouse).